Reading from the N-terminus, the 101-residue chain is DNA-binding protein Fis (101 aa).

The H-T-H motif DNA-binding region spans 77–96 (QTRAANMLGINRGTLRKKLK).

It belongs to the transcriptional regulatory Fis family. Homodimer.

Its function is as follows. Activates ribosomal RNA transcription. Plays a direct role in upstream activation of rRNA promoters. This chain is DNA-binding protein Fis, found in Shewanella baltica (strain OS223).